We begin with the raw amino-acid sequence, 429 residues long: UPF0597 protein GSU1527 (429 aa).

This sequence belongs to the UPF0597 family.

This chain is UPF0597 protein GSU1527, found in Geobacter sulfurreducens (strain ATCC 51573 / DSM 12127 / PCA).